The sequence spans 473 residues: Photosystem II CP43 reaction center protein (473 aa).

Residues 1-14 constitute a propeptide that is removed on maturation; sequence MKTLYSLRRFYHVE. T15 bears the N-acetylthreonine mark. Residue T15 is modified to Phosphothreonine. The next 5 membrane-spanning stretches (helical) occupy residues 69-93, 134-155, 178-200, 255-275, and 291-312; these read LFEV…PHLA, LLGP…KDRN, KALY…RKIT, KPFA…LSYS, and WFNN…ASQA. A [CaMn4O5] cluster-binding site is contributed by E367. Residues 447–471 traverse the membrane as a helical segment; that stretch reads RARAAAAGFEKGIDRDFEPVLSMTP.

This sequence belongs to the PsbB/PsbC family. PsbC subfamily. PSII is composed of 1 copy each of membrane proteins PsbA, PsbB, PsbC, PsbD, PsbE, PsbF, PsbH, PsbI, PsbJ, PsbK, PsbL, PsbM, PsbT, PsbX, PsbY, PsbZ, Psb30/Ycf12, at least 3 peripheral proteins of the oxygen-evolving complex and a large number of cofactors. It forms dimeric complexes. It depends on Binds multiple chlorophylls and provides some of the ligands for the Ca-4Mn-5O cluster of the oxygen-evolving complex. It may also provide a ligand for a Cl- that is required for oxygen evolution. PSII binds additional chlorophylls, carotenoids and specific lipids. as a cofactor.

The protein resides in the plastid. It is found in the chloroplast thylakoid membrane. In terms of biological role, one of the components of the core complex of photosystem II (PSII). It binds chlorophyll and helps catalyze the primary light-induced photochemical processes of PSII. PSII is a light-driven water:plastoquinone oxidoreductase, using light energy to abstract electrons from H(2)O, generating O(2) and a proton gradient subsequently used for ATP formation. The chain is Photosystem II CP43 reaction center protein from Atropa belladonna (Belladonna).